The sequence spans 93 residues: Alpha-defensin 2 (93 aa).

An N-terminal signal peptide occupies residues Met-1–Ala-19. Residues Asp-20–Ser-58 constitute a propeptide that is removed on maturation. Positions Gln-23–Arg-49 are disordered. 3 disulfides stabilise this stretch: Cys-64-Cys-92, Cys-66-Cys-81, and Cys-71-Cys-91.

Belongs to the alpha-defensin family. Paneth cells of the small bowel.

It is found in the secreted. Functionally, has broad-spectrum antimicrobial properties. Has antibacterial activity against the Gram-positive bacterium L.monocytogenes EGD and the Gram-negative bacteria E.coli ML-35p and avirulent S.typhimurium 7953, but not against the mouse-virulent S.typhimurium 14028S. Probably contributes to the antimicrobial barrier function of the small bowel mucosa. The protein is Alpha-defensin 2 (Defa2) of Mus musculus (Mouse).